A 404-amino-acid chain; its full sequence is MESSSSSSYIPFIRQIAASVSAASCDAVVGGGGDKDEECRDEAAALRLKMVAVAAILIAGAAGVAIPLVGRRRRGGGGGGGGGASSGGLFVLAKAFAAGVILATGFVHMLHDAEHALSNPCLPHSPWRRFPFPGFVAMLAALATLVVDFVGTHFYERKHRQEEAAAAAEEAAAALLEDGGALPVGDGEGRDGRGGKRDAMHIVGIHAHAAAHRHSHAHVHGACHGGAVNDAHAHGHGHGHEEGPSARHVVVSQILELGIVSHSVIIGLSLGVSQSPCTIKPLVAALSFHQFFEGFALGGCISEAQLKNFSAFLMAFFFAITTPAGITVGAAVASFYNPNSPRALVVEGILDSMSAGILIYMALVDLIAADFLSRKMSCNPRLQVGSYIALFLGAMAMAALALWA.

An N-terminal signal peptide occupies residues 1–22; the sequence is MESSSSSSYIPFIRQIAASVSA. Residues 23-49 are Extracellular-facing; it reads ASCDAVVGGGGDKDEECRDEAAALRLK. A helical membrane pass occupies residues 50 to 70; the sequence is MVAVAAILIAGAAGVAIPLVG. Residues 71 to 86 lie on the Cytoplasmic side of the membrane; sequence RRRRGGGGGGGGGASS. A helical membrane pass occupies residues 87 to 107; it reads GGLFVLAKAFAAGVILATGFV. Topologically, residues 108–129 are extracellular; sequence HMLHDAEHALSNPCLPHSPWRR. The chain crosses the membrane as a helical span at residues 130-150; the sequence is FPFPGFVAMLAALATLVVDFV. At 151–248 the chain is on the cytoplasmic side; that stretch reads GTHFYERKHR…GHEEGPSARH (98 aa). Residues 249 to 269 form a helical membrane-spanning segment; the sequence is VVVSQILELGIVSHSVIIGLS. Residues 270 to 280 lie on the Extracellular side of the membrane; it reads LGVSQSPCTIK. A helical membrane pass occupies residues 281 to 301; it reads PLVAALSFHQFFEGFALGGCI. Over 302–311 the chain is Cytoplasmic; sequence SEAQLKNFSA. Residues 312-332 form a helical membrane-spanning segment; that stretch reads FLMAFFFAITTPAGITVGAAV. The Extracellular portion of the chain corresponds to 333 to 343; sequence ASFYNPNSPRA. Residues 344–364 form a helical membrane-spanning segment; sequence LVVEGILDSMSAGILIYMALV. The Cytoplasmic portion of the chain corresponds to 365–383; sequence DLIAADFLSRKMSCNPRLQ. The chain crosses the membrane as a helical span at residues 384–404; sequence VGSYIALFLGAMAMAALALWA.

This sequence belongs to the ZIP transporter (TC 2.A.5) family.

The protein resides in the cell membrane. Zinc transporter that may be involved in zinc uptake from the rhizosphere. This chain is Zinc transporter 10 (ZIP10), found in Oryza sativa subsp. japonica (Rice).